The chain runs to 357 residues: tRNA N6-adenosine threonylcarbamoyltransferase (357 aa).

The Fe cation site is built by histidine 119 and histidine 123. Substrate is bound by residues 141–145 (LISGG), aspartate 174, glycine 187, and asparagine 284. Aspartate 312 serves as a coordination point for Fe cation.

The protein belongs to the KAE1 / TsaD family. Requires Fe(2+) as cofactor.

It is found in the cytoplasm. The enzyme catalyses L-threonylcarbamoyladenylate + adenosine(37) in tRNA = N(6)-L-threonylcarbamoyladenosine(37) in tRNA + AMP + H(+). Functionally, required for the formation of a threonylcarbamoyl group on adenosine at position 37 (t(6)A37) in tRNAs that read codons beginning with adenine. Is involved in the transfer of the threonylcarbamoyl moiety of threonylcarbamoyl-AMP (TC-AMP) to the N6 group of A37, together with TsaE and TsaB. TsaD likely plays a direct catalytic role in this reaction. This chain is tRNA N6-adenosine threonylcarbamoyltransferase, found in Pelagibacter ubique (strain HTCC1062).